Reading from the N-terminus, the 213-residue chain is Non-structural protein NP-1 (213 aa).

The interval 1 to 80 (MERSRSPRET…ATRKETATKK (80 aa)) is disordered. Composition is skewed to basic and acidic residues over residues 15-33 (SRDK…ERTR) and 43-58 (AHGE…REKN).

The protein belongs to the Bocaparvovirus Non-structural protein NP-1 family.

Its subcellular location is the host nucleus. In terms of biological role, required for the expression of the capsid proteins. Performs the splicing and internal polyadenylation of the viral capsid-encoding mRNA precursor, which allows its maturation and expression. Transactivates the viral promoter. The sequence is that of Non-structural protein NP-1 (NP1) from Bos taurus (Bovine).